A 294-amino-acid chain; its full sequence is Metallophosphoesterase MPPED2 (294 aa).

Mn(2+) is bound by residues D65, H67, D86, N117, and H213. Residue 117 to 118 (NH) coordinates GMP. GMP-binding positions include 225-226 (KE) and 254-255 (HE). H254 is a Mn(2+) binding site.

It belongs to the UPF0046 family. Homodimer. Mn(2+) is required as a cofactor. It depends on Co(2+) as a cofactor. Expressed in fetal brain (at protein level). detected in fetal and adult brain.

Inhibited by nmolar levels of AMP and GMP. Its function is as follows. Displays low metallophosphoesterase activity (in vitro). May play a role in the development of the nervous system. This Rattus norvegicus (Rat) protein is Metallophosphoesterase MPPED2 (Mpped2).